Reading from the N-terminus, the 465-residue chain is Ribulose bisphosphate carboxylase large chain (465 aa).

Lys4 is modified (N6,N6,N6-trimethyllysine). Substrate contacts are provided by Asn113 and Thr163. The active-site Proton acceptor is Lys165. A substrate-binding site is contributed by Lys167. Mg(2+) is bound by residues Lys191, Asp193, and Glu194. Lys191 bears the N6-carboxylysine mark. His284 acts as the Proton acceptor in catalysis. Substrate is bound by residues Arg285, His317, and Ser369.

The protein belongs to the RuBisCO large chain family. Type I subfamily. As to quaternary structure, heterohexadecamer of 8 large chains and 8 small chains; disulfide-linked. The disulfide link is formed within the large subunit homodimers. Mg(2+) is required as a cofactor. In terms of processing, the disulfide bond which can form in the large chain dimeric partners within the hexadecamer appears to be associated with oxidative stress and protein turnover.

The protein resides in the plastid. Its subcellular location is the chloroplast. It carries out the reaction 2 (2R)-3-phosphoglycerate + 2 H(+) = D-ribulose 1,5-bisphosphate + CO2 + H2O. The catalysed reaction is D-ribulose 1,5-bisphosphate + O2 = 2-phosphoglycolate + (2R)-3-phosphoglycerate + 2 H(+). Functionally, ruBisCO catalyzes two reactions: the carboxylation of D-ribulose 1,5-bisphosphate, the primary event in carbon dioxide fixation, as well as the oxidative fragmentation of the pentose substrate in the photorespiration process. Both reactions occur simultaneously and in competition at the same active site. The protein is Ribulose bisphosphate carboxylase large chain of Morella cerifera (Wax myrtle).